We begin with the raw amino-acid sequence, 512 residues long: Proline--tRNA ligase (512 aa).

Residues 460 to 470 (SDEDDEQDTTD) show a composition bias toward acidic residues. The interval 460–484 (SDEDDEQDTTDENMGVNNDTTVESN) is disordered.

It belongs to the class-II aminoacyl-tRNA synthetase family. ProS type 3 subfamily. As to quaternary structure, homodimer.

The protein resides in the cytoplasm. It catalyses the reaction tRNA(Pro) + L-proline + ATP = L-prolyl-tRNA(Pro) + AMP + diphosphate. Its function is as follows. Catalyzes the attachment of proline to tRNA(Pro) in a two-step reaction: proline is first activated by ATP to form Pro-AMP and then transferred to the acceptor end of tRNA(Pro). The chain is Proline--tRNA ligase from Haloquadratum walsbyi (strain DSM 16790 / HBSQ001).